The sequence spans 308 residues: tRNA dimethylallyltransferase (308 aa).

14 to 21 (GPTASGKT) lines the ATP pocket. 16–21 (TASGKT) contributes to the substrate binding site. 3 interaction with substrate tRNA regions span residues 39-42 (DSAL), 163-167 (QRLSR), and 244-249 (RCVGYR).

The protein belongs to the IPP transferase family. In terms of assembly, monomer. Mg(2+) serves as cofactor.

It carries out the reaction adenosine(37) in tRNA + dimethylallyl diphosphate = N(6)-dimethylallyladenosine(37) in tRNA + diphosphate. In terms of biological role, catalyzes the transfer of a dimethylallyl group onto the adenine at position 37 in tRNAs that read codons beginning with uridine, leading to the formation of N6-(dimethylallyl)adenosine (i(6)A). This is tRNA dimethylallyltransferase from Shewanella baltica (strain OS223).